Reading from the N-terminus, the 308-residue chain is Ribosomal RNA small subunit methyltransferase H (308 aa).

S-adenosyl-L-methionine is bound by residues glycine 31 to histidine 33, aspartate 51, phenylalanine 75, aspartate 97, and glutamine 104.

This sequence belongs to the methyltransferase superfamily. RsmH family.

The protein resides in the cytoplasm. It catalyses the reaction cytidine(1402) in 16S rRNA + S-adenosyl-L-methionine = N(4)-methylcytidine(1402) in 16S rRNA + S-adenosyl-L-homocysteine + H(+). In terms of biological role, specifically methylates the N4 position of cytidine in position 1402 (C1402) of 16S rRNA. This Tolumonas auensis (strain DSM 9187 / NBRC 110442 / TA 4) protein is Ribosomal RNA small subunit methyltransferase H.